The primary structure comprises 398 residues: Argininosuccinate synthase (398 aa).

Residue 9-17 participates in ATP binding; sequence AYSGGLDTS. An L-citrulline-binding site is contributed by Y85. G115 serves as a coordination point for ATP. The L-aspartate site is built by T117, N121, and D122. L-citrulline is bound at residue N121. L-citrulline-binding residues include R125, S173, E258, and Y270.

The protein belongs to the argininosuccinate synthase family. Type 1 subfamily. As to quaternary structure, homotetramer.

The protein localises to the cytoplasm. It carries out the reaction L-citrulline + L-aspartate + ATP = 2-(N(omega)-L-arginino)succinate + AMP + diphosphate + H(+). It functions in the pathway amino-acid biosynthesis; L-arginine biosynthesis; L-arginine from L-ornithine and carbamoyl phosphate: step 2/3. This Streptococcus pneumoniae (strain ATCC BAA-255 / R6) protein is Argininosuccinate synthase.